A 439-amino-acid polypeptide reads, in one-letter code: Ribosomal protein uS12 methylthiotransferase RimO (439 aa).

Positions 3-115 constitute an MTTase N-terminal domain; that stretch reads KKLHLISLGC…IDQMVRERQG (113 aa). [4Fe-4S] cluster contacts are provided by cysteine 12, cysteine 46, cysteine 78, cysteine 147, cysteine 151, and cysteine 154. The 230-residue stretch at 133–362 folds into the Radical SAM core domain; the sequence is TGSSVHAYVK…DKIIQKQHRA (230 aa).

It belongs to the methylthiotransferase family. RimO subfamily. It depends on [4Fe-4S] cluster as a cofactor.

It is found in the cytoplasm. It carries out the reaction L-aspartate(89)-[ribosomal protein uS12]-hydrogen + (sulfur carrier)-SH + AH2 + 2 S-adenosyl-L-methionine = 3-methylsulfanyl-L-aspartate(89)-[ribosomal protein uS12]-hydrogen + (sulfur carrier)-H + 5'-deoxyadenosine + L-methionine + A + S-adenosyl-L-homocysteine + 2 H(+). Catalyzes the methylthiolation of an aspartic acid residue of ribosomal protein uS12. The protein is Ribosomal protein uS12 methylthiotransferase RimO of Wolinella succinogenes (strain ATCC 29543 / DSM 1740 / CCUG 13145 / JCM 31913 / LMG 7466 / NCTC 11488 / FDC 602W) (Vibrio succinogenes).